Here is a 255-residue protein sequence, read N- to C-terminus: Glioma pathogenesis-related protein 1 (255 aa).

The N-terminal stretch at M1–S17 is a signal peptide. Residues Q39–Y164 form the SCP domain. Residues S224–V244 form a helical membrane-spanning segment.

The protein belongs to the CRISP family.

Its subcellular location is the membrane. The polypeptide is Glioma pathogenesis-related protein 1 (Glipr1) (Mus musculus (Mouse)).